A 291-amino-acid chain; its full sequence is DNA repair protein RecO (291 aa).

The protein belongs to the RecO family.

Functionally, involved in DNA repair and RecF pathway recombination. This Cupriavidus pinatubonensis (strain JMP 134 / LMG 1197) (Cupriavidus necator (strain JMP 134)) protein is DNA repair protein RecO.